Here is a 759-residue protein sequence, read N- to C-terminus: LPS-assembly protein LptD (759 aa).

The N-terminal stretch at 1 to 22 (MPLPIPRLLIPALLLASGASLA) is a signal peptide.

The protein belongs to the LptD family. In terms of assembly, component of the lipopolysaccharide transport and assembly complex. Interacts with LptE and LptA.

It localises to the cell outer membrane. Functionally, together with LptE, is involved in the assembly of lipopolysaccharide (LPS) at the surface of the outer membrane. The polypeptide is LPS-assembly protein LptD (Alcanivorax borkumensis (strain ATCC 700651 / DSM 11573 / NCIMB 13689 / SK2)).